Reading from the N-terminus, the 376-residue chain is Carbapenem antibiotics biosynthesis protein CarD (376 aa).

The protein belongs to the proline oxidase family.

Its pathway is antibiotic biosynthesis; carbapenem biosynthesis. The protein is Carbapenem antibiotics biosynthesis protein CarD (carD) of Pectobacterium carotovorum subsp. carotovorum (Erwinia carotovora subsp. carotovora).